The chain runs to 728 residues: 1,4-alpha-glucan branching enzyme GlgB (728 aa).

The Nucleophile role is filled by aspartate 405. The active-site Proton donor is glutamate 458.

The protein belongs to the glycosyl hydrolase 13 family. GlgB subfamily. In terms of assembly, monomer.

The catalysed reaction is Transfers a segment of a (1-&gt;4)-alpha-D-glucan chain to a primary hydroxy group in a similar glucan chain.. It functions in the pathway glycan biosynthesis; glycogen biosynthesis. In terms of biological role, catalyzes the formation of the alpha-1,6-glucosidic linkages in glycogen by scission of a 1,4-alpha-linked oligosaccharide from growing alpha-1,4-glucan chains and the subsequent attachment of the oligosaccharide to the alpha-1,6 position. The protein is 1,4-alpha-glucan branching enzyme GlgB of Escherichia coli O1:K1 / APEC.